The sequence spans 131 residues: SPbeta prophage-derived uncharacterized protein YoqY (131 aa).

The protein is SPbeta prophage-derived uncharacterized protein YoqY (yoqY) of Bacillus subtilis (strain 168).